Reading from the N-terminus, the 413-residue chain is Gamma-glutamyl phosphate reductase (413 aa).

It belongs to the gamma-glutamyl phosphate reductase family.

The protein localises to the cytoplasm. The catalysed reaction is L-glutamate 5-semialdehyde + phosphate + NADP(+) = L-glutamyl 5-phosphate + NADPH + H(+). The protein operates within amino-acid biosynthesis; L-proline biosynthesis; L-glutamate 5-semialdehyde from L-glutamate: step 2/2. Catalyzes the NADPH-dependent reduction of L-glutamate 5-phosphate into L-glutamate 5-semialdehyde and phosphate. The product spontaneously undergoes cyclization to form 1-pyrroline-5-carboxylate. The chain is Gamma-glutamyl phosphate reductase from Rhodococcus jostii (strain RHA1).